Consider the following 66-residue polypeptide: DNA gyrase inhibitor YacG (66 aa).

Zn(2+) is bound by residues Cys9, Cys12, Cys28, and Cys32. The tract at residues 45–66 is disordered; sequence HKIAGSEESEDELYSGDLEPRH.

This sequence belongs to the DNA gyrase inhibitor YacG family. As to quaternary structure, interacts with GyrB. Requires Zn(2+) as cofactor.

In terms of biological role, inhibits all the catalytic activities of DNA gyrase by preventing its interaction with DNA. Acts by binding directly to the C-terminal domain of GyrB, which probably disrupts DNA binding by the gyrase. The polypeptide is DNA gyrase inhibitor YacG (Pseudomonas putida (strain ATCC 47054 / DSM 6125 / CFBP 8728 / NCIMB 11950 / KT2440)).